We begin with the raw amino-acid sequence, 299 residues long: GTPase Era (299 aa).

Positions 5–172 (KSGFVSIIGR…IDVLKSFLPE (168 aa)) constitute an Era-type G domain. The segment at 13–20 (GRPNVGKS) is G1. Position 13-20 (13-20 (GRPNVGKS)) interacts with GTP. Positions 39-43 (QTTRN) are G2. The G3 stretch occupies residues 60 to 63 (DTPG). GTP contacts are provided by residues 60–64 (DTPGI) and 122–125 (NKID). The tract at residues 122–125 (NKID) is G4. A G5 region spans residues 151 to 153 (ISA). Residues 203–280 (TSEEIPHAIG…YLELWVKVQR (78 aa)) form the KH type-2 domain.

Belongs to the TRAFAC class TrmE-Era-EngA-EngB-Septin-like GTPase superfamily. Era GTPase family. As to quaternary structure, monomer.

It localises to the cytoplasm. The protein localises to the cell membrane. Functionally, an essential GTPase that binds both GDP and GTP, with rapid nucleotide exchange. Plays a role in 16S rRNA processing and 30S ribosomal subunit biogenesis and possibly also in cell cycle regulation and energy metabolism. In Staphylococcus epidermidis (strain ATCC 35984 / DSM 28319 / BCRC 17069 / CCUG 31568 / BM 3577 / RP62A), this protein is GTPase Era.